We begin with the raw amino-acid sequence, 841 residues long: pre-rRNA 2'-O-ribose RNA methyltransferase FTSJ3 (841 aa).

Residues Gly-56, Trp-58, Asp-76, Asp-92, and Asp-117 each coordinate S-adenosyl-L-methionine. The active-site Proton acceptor is the Lys-157. A disordered region spans residues Ile-332–Asn-366. 5 positions are modified to phosphoserine: Ser-333, Ser-335, Ser-336, Ser-347, and Ser-356. Positions Gly-337–Ser-347 are enriched in acidic residues. Residues Ser-356–Leu-404 are a coiled coil. A Glycyl lysine isopeptide (Lys-Gly) (interchain with G-Cter in SUMO2) cross-link involves residue Lys-357. Arg-389 is subject to Citrulline. The tract at residues Val-454–Gln-482 is disordered. A compositionally biased stretch (acidic residues) spans Asp-456–Glu-474. Ser-547 is modified (phosphoserine). Position 567 is a phosphothreonine (Thr-567). Lys-573 participates in a covalent cross-link: Glycyl lysine isopeptide (Lys-Gly) (interchain with G-Cter in SUMO2). Residue Ser-578 is modified to Phosphoserine. The tract at residues Pro-579 to His-654 is disordered. Residue Lys-637 forms a Glycyl lysine isopeptide (Lys-Gly) (interchain with G-Cter in SUMO2) linkage. The residue at position 638 (Ser-638) is a Phosphoserine. Lys-653 is covalently cross-linked (Glycyl lysine isopeptide (Lys-Gly) (interchain with G-Cter in SUMO2)). Phosphoserine is present on Ser-670. Lys-672 is covalently cross-linked (Glycyl lysine isopeptide (Lys-Gly) (interchain with G-Cter in SUMO2)). Residue Ser-682 is modified to Phosphoserine. A Glycyl lysine isopeptide (Lys-Gly) (interchain with G-Cter in SUMO2) cross-link involves residue Lys-704. Positions Ile-733 to Glu-771 form a coiled coil. Arg-777 is subject to Citrulline. Over residues Val-805 to Phe-815 the composition is skewed to basic residues. The interval Val-805–Lys-841 is disordered. The span at Lys-816–Lys-832 shows a compositional bias: basic and acidic residues.

Belongs to the class I-like SAM-binding methyltransferase superfamily. RNA methyltransferase RlmE family. SPB1 subfamily. Interacts with NIP7. Post-translationally, citrullinated by PADI4.

The protein localises to the nucleus. It localises to the nucleolus. It carries out the reaction a ribonucleotide in rRNA + S-adenosyl-L-methionine = a 2'-O-methylribonucleotide in rRNA + S-adenosyl-L-homocysteine + H(+). Functionally, RNA 2'-O-methyltransferase involved in the processing of the 34S pre-rRNA to 18S rRNA and in 40S ribosomal subunit formation. This Pongo abelii (Sumatran orangutan) protein is pre-rRNA 2'-O-ribose RNA methyltransferase FTSJ3.